We begin with the raw amino-acid sequence, 200 residues long: Snake venom metalloproteinase BmooMP-I (200 aa).

A Peptidase M12B domain is found at 5-200; the sequence is RYIELAVVAD…HNPQCILNEP (196 aa). Residues Glu-8 and Asp-92 each coordinate Ca(2+). Disulfide bonds link Cys-116–Cys-195, Cys-155–Cys-179, and Cys-157–Cys-162. Residue His-141 participates in Zn(2+) binding. The active site involves Glu-142. Residues His-145 and His-151 each coordinate Zn(2+). Ca(2+) is bound by residues Cys-195 and Asn-198.

This sequence belongs to the venom metalloproteinase (M12B) family. P-I subfamily. In terms of assembly, monomer. Zn(2+) is required as a cofactor. As to expression, expressed by the venom gland.

The protein localises to the secreted. Functionally, zinc metalloprotease that displays fibrinogenolytic, gelatinase and weak hemorrhagic activities. Degrades the three chain of fibrinogen Aalpha-chain (FGA), Bbeta-chain (FGB), and gamma (FGG). This is Snake venom metalloproteinase BmooMP-I from Bothrops moojeni (Lance-headed viper).